A 577-amino-acid polypeptide reads, in one-letter code: Arginine--tRNA ligase (577 aa).

A 'HIGH' region motif is present at residues 122–132 (PNVAKEMHVGH).

It belongs to the class-I aminoacyl-tRNA synthetase family. Monomer.

The protein localises to the cytoplasm. It carries out the reaction tRNA(Arg) + L-arginine + ATP = L-arginyl-tRNA(Arg) + AMP + diphosphate. In Vibrio vulnificus (strain CMCP6), this protein is Arginine--tRNA ligase.